Reading from the N-terminus, the 256-residue chain is Large ribosomal subunit protein eL8y (256 aa).

Positions 1-15 are enriched in basic residues; it reads MAPKKGVKVASKKKP. A disordered region spans residues 1–20; the sequence is MAPKKGVKVASKKKPEKVTN.

It belongs to the eukaryotic ribosomal protein eL8 family.

The chain is Large ribosomal subunit protein eL8y (RPL7AB) from Arabidopsis thaliana (Mouse-ear cress).